We begin with the raw amino-acid sequence, 157 residues long: MIRIGQGYDVHKLAYDRDLIIGGVKIPYEKGLLGHSDADVLLHAITDAIIGAIGAGDIGHFFPDTDMVFKDADSAELLAEIWQKVEADGFRLGNLDATIIAEKPKMAPYVEQMKLRIAELLHADSAQVNVKATTTEKLGFTGREEGIASLAVVLLEK.

A divalent metal cation contacts are provided by Asp-9 and His-11. 4-CDP-2-C-methyl-D-erythritol 2-phosphate contacts are provided by residues Asp-9–His-11 and His-35–Ser-36. His-43 provides a ligand contact to a divalent metal cation. 4-CDP-2-C-methyl-D-erythritol 2-phosphate-binding positions include Asp-57–Gly-59, Phe-62–Asp-66, Ala-101–Ala-107, Thr-133–Glu-136, Phe-140, and Arg-143.

Belongs to the IspF family. As to quaternary structure, homotrimer. A divalent metal cation serves as cofactor.

It catalyses the reaction 4-CDP-2-C-methyl-D-erythritol 2-phosphate = 2-C-methyl-D-erythritol 2,4-cyclic diphosphate + CMP. It participates in isoprenoid biosynthesis; isopentenyl diphosphate biosynthesis via DXP pathway; isopentenyl diphosphate from 1-deoxy-D-xylulose 5-phosphate: step 4/6. Its function is as follows. Involved in the biosynthesis of isopentenyl diphosphate (IPP) and dimethylallyl diphosphate (DMAPP), two major building blocks of isoprenoid compounds. Catalyzes the conversion of 4-diphosphocytidyl-2-C-methyl-D-erythritol 2-phosphate (CDP-ME2P) to 2-C-methyl-D-erythritol 2,4-cyclodiphosphate (ME-CPP) with a corresponding release of cytidine 5-monophosphate (CMP). The polypeptide is 2-C-methyl-D-erythritol 2,4-cyclodiphosphate synthase (Listeria monocytogenes serovar 1/2a (strain ATCC BAA-679 / EGD-e)).